A 374-amino-acid polypeptide reads, in one-letter code: Protein dip1 (374 aa).

The protein belongs to the LDB17 family.

It localises to the cytoplasm. The protein localises to the nucleus. Its subcellular location is the cell tip. Functionally, may be involved in protein-linked oligosaccharide phosphorylation. The polypeptide is Protein dip1 (dip1) (Schizosaccharomyces pombe (strain 972 / ATCC 24843) (Fission yeast)).